A 212-amino-acid polypeptide reads, in one-letter code: Adenylate kinase (212 aa).

An ATP-binding site is contributed by 10-15 (GAGKGT). The interval 30–59 (STGDMFRAAMANQTEMGRLAKSYIDKGELV) is NMP. AMP-binding positions include Thr31, Arg36, 57–59 (ELV), 86–89 (GYPR), and Gln93. The segment at 127 to 159 (GRIINRKTGETFHKVFNPPVDYKEEDYYQREDD) is LID. ATP is bound by residues Arg128 and 137–138 (TF). The AMP site is built by Arg156 and Arg167. Gln195 is a binding site for ATP.

The protein belongs to the adenylate kinase family. As to quaternary structure, monomer.

It is found in the cytoplasm. It catalyses the reaction AMP + ATP = 2 ADP. It functions in the pathway purine metabolism; AMP biosynthesis via salvage pathway; AMP from ADP: step 1/1. Catalyzes the reversible transfer of the terminal phosphate group between ATP and AMP. Plays an important role in cellular energy homeostasis and in adenine nucleotide metabolism. The sequence is that of Adenylate kinase from Streptococcus pyogenes serotype M1.